A 965-amino-acid polypeptide reads, in one-letter code: Meiosis-specific coiled-coil domain-containing protein MEIOC (965 aa).

Disordered stretches follow at residues 1–22 and 946–965; these read MEVS…EGPE and VHES…TSKH. Positions 949-965 are enriched in polar residues; that stretch reads SINSSNPMNQRGETSKH.

Interacts with YTHDC2; binds transcripts that regulate the mitotic cell cycle inhibiting progression into metaphase, thereby allowing meiotic prophase to proceed normally. Interacts with RBM46. Expressed specifically in fetal ovary and postnatal and adult testes (at protein level). In adult testis expressed in spermatocytes, beginning in preleptotene and extending through most stages of meiotic prophase I, including leptotene, zygotene, and pachytene.

The protein localises to the cytoplasm. It localises to the nucleus. Its function is as follows. Is required for meiosis completion in both male and female germ cells. Confers stability to numerous meiotic mRNAs in gonads allowing proper initiation and progression into meiosis prophase I. The function may involve YTHDC2 and is independent of induction by retinoic acid (RA). Maintains an extended meiotic prophase I by properly promoting the transition from a mitotic to a meiotic cell cycle program by binding transcripts through its interaction with YTHDC2 that regulate the mitotic cell cycle. This chain is Meiosis-specific coiled-coil domain-containing protein MEIOC, found in Mus musculus (Mouse).